The chain runs to 388 residues: Protochlorophyllide reductase A, chloroplastic (388 aa).

A chloroplast-targeting transit peptide spans 1 to 74 (MALQLLPSTL…SPSGKKTLRQ (74 aa)). Positions 48-68 (VATAPSPVTTSPGSTASSPSG) are enriched in low complexity. Residues 48-69 (VATAPSPVTTSPGSTASSPSGK) are disordered.

It belongs to the short-chain dehydrogenases/reductases (SDR) family. POR subfamily.

The protein resides in the plastid. Its subcellular location is the chloroplast. The catalysed reaction is chlorophyllide a + NADP(+) = protochlorophyllide a + NADPH + H(+). It functions in the pathway porphyrin-containing compound metabolism; chlorophyll biosynthesis. Functionally, phototransformation of protochlorophyllide (Pchlide) to chlorophyllide (Chlide). In Hordeum vulgare (Barley), this protein is Protochlorophyllide reductase A, chloroplastic (PORA).